Consider the following 239-residue polypeptide: Uridylate kinase (239 aa).

12-15 (KLSG) serves as a coordination point for ATP. The involved in allosteric activation by GTP stretch occupies residues 20-25 (GDQGAG). Gly54 contributes to the UMP binding site. Residues Gly55 and Arg59 each coordinate ATP. UMP-binding positions include Asp74 and 135–142 (TGNPFFTT). Positions 162, 168, and 171 each coordinate ATP.

This sequence belongs to the UMP kinase family. As to quaternary structure, homohexamer.

The protein resides in the cytoplasm. The enzyme catalyses UMP + ATP = UDP + ADP. Its pathway is pyrimidine metabolism; CTP biosynthesis via de novo pathway; UDP from UMP (UMPK route): step 1/1. Its activity is regulated as follows. Allosterically activated by GTP. Inhibited by UTP. Functionally, catalyzes the reversible phosphorylation of UMP to UDP. The sequence is that of Uridylate kinase from Methylococcus capsulatus (strain ATCC 33009 / NCIMB 11132 / Bath).